The following is a 434-amino-acid chain: Sensor histidine kinase Hik2 (434 aa).

A GAF domain is found at 16 to 152; it reads ISLCQSQVRL…EAIAKSLAVA (137 aa). Position 19 (Cys-19) interacts with [3Fe-4S] cluster. The 251-residue stretch at 182–432 folds into the Histidine kinase domain; it reads DLLHQLRNPL…TFTLWLRSGE (251 aa). His-185 bears the Phosphohistidine; by autocatalysis mark. The G1 box motif lies at 357 to 361; the sequence is DTGYG. A G2 box motif is present at residues 386 to 390; it reads GTGLG.

It belongs to the chloroplast sensor kinase protein family. As to quaternary structure, exists as monomers, tetramers, hexamers and other higher-order oligomers; all are able to autophosphorylate. Upon treatment with 0.5 M NaCl only tetramers are seen, which are probably inactive. Interacts with both RppA and Rre1. It depends on [3Fe-4S] cluster as a cofactor. Autophosphorylates, probably on His-185.

Its subcellular location is the cytoplasm. It catalyses the reaction ATP + protein L-histidine = ADP + protein N-phospho-L-histidine.. Autophosphorylation is inhibited by Na(+) but not by Cl(-). Reducing agents dithionite, duroquinol and decyl-plastoquinone, but not NADPH or ferredoxin inhibit autophosphorylation. Oxidation of the Fe-S cluster (with potassium ferricyanide) induces a conformational change that is conducive to its autophosphorylation activity. Member of possibly 2 two-component regulatory system(s) Hik2/Rre1 and Hik2/RppA. Transduces PQ (plastoquinone) redox signals to photosystem gene expression machinery during the adjustment of photosystem stoichiometry. Reduced PQ suppresses its autophosphorylation activity (i.e. kinase activity is higher under oxidizing conditions). Member of two-component regulatory system Hik2/Rre1, controls expression of sigB (sll0306), sll0528, slr1119, slr0852 and ssr3188 in response to hyperosmotic stress. Activity responds to high salt (with a linear response as concentrations rise to 0.5 M NaCl); detects Cl(-) levels. Autophosphorylates and transfers phosphate to Rre1. May transfer phosphate to RppA in a possible Hik2/RppA two-component system. The sequence is that of Sensor histidine kinase Hik2 from Synechocystis sp. (strain ATCC 27184 / PCC 6803 / Kazusa).